A 142-amino-acid chain; its full sequence is Large ribosomal subunit protein uL11 (142 aa).

This sequence belongs to the universal ribosomal protein uL11 family. In terms of assembly, part of the ribosomal stalk of the 50S ribosomal subunit. Interacts with L10 and the large rRNA to form the base of the stalk. L10 forms an elongated spine to which L12 dimers bind in a sequential fashion forming a multimeric L10(L12)X complex. One or more lysine residues are methylated.

In terms of biological role, forms part of the ribosomal stalk which helps the ribosome interact with GTP-bound translation factors. This is Large ribosomal subunit protein uL11 from Magnetococcus marinus (strain ATCC BAA-1437 / JCM 17883 / MC-1).